We begin with the raw amino-acid sequence, 394 residues long: Small ribosomal subunit protein mS79 (rPPR3b) (394 aa).

The N-terminal 24 residues, 1–24 (MSSLSRFLLRGNFSFSTHTNRRFF), are a transit peptide targeting the mitochondrion. PPR repeat units follow at residues 105–139 (KEGF…NCKR), 140–170 (TALS…LPGK), 176–210 (DVAS…GLKP), 211–245 (DHIT…NVKR), 246–280 (DIRS…ELKP), 281–315 (DVFT…GCRP), 316–350 (LKFV…RLLV), and 351–385 (DEAV…DYLQ).

It belongs to the PPR family. P subfamily. As to quaternary structure, component of the mitochondrial ribosome small subunit.

It localises to the mitochondrion. The protein is Small ribosomal subunit protein mS79 (rPPR3b) of Arabidopsis thaliana (Mouse-ear cress).